A 396-amino-acid chain; its full sequence is MAKEKFERKKPHVNVGTIGHVDHGKTTLTAAITTIMAKKYGGTAKAYDQIDAAPEERERGITISTAHVEYESASRHYAHVDCPGHADYVKNMITGAAQMDGAILVVSAADGPMPQTREHILLSRQVGVPYIVVFMNKADMVDDPELLELVEMEVRDLLSSYDFPGDDIPIIVGSALKALEGEDSDIGVKAIEKLVETMDSYIPEPVRNIDKPFLLPIEDVFSISGRGTVVTGRVESGIVKVGEEVEIVGIRDTQKTTCTGVEMFRKLLDEGRAGDNVGVLLRGTKRDEVERGQVLAKPGTIKPHTKFEAEVYVLSKEEGGRHTPFFNGYRPQFYFRTTDVTGTCDLPSGVEMVMPGDNVQLVVSLHAPIAMDEGLRFAIREGGRTVGAGVVAKIIE.

The 197-residue stretch at 10 to 206 (KPHVNVGTIG…TMDSYIPEPV (197 aa)) folds into the tr-type G domain. Residues 19-26 (GHVDHGKT) form a G1 region. A GTP-binding site is contributed by 19 to 26 (GHVDHGKT). Thr-26 is a binding site for Mg(2+). Residues 60 to 64 (GITIS) form a G2 region. The interval 81–84 (DCPG) is G3. GTP-binding positions include 81–85 (DCPGH) and 136–139 (NKAD). Residues 136-139 (NKAD) form a G4 region. Residues 174-176 (SAL) form a G5 region.

This sequence belongs to the TRAFAC class translation factor GTPase superfamily. Classic translation factor GTPase family. EF-Tu/EF-1A subfamily. In terms of assembly, monomer.

Its subcellular location is the cytoplasm. The enzyme catalyses GTP + H2O = GDP + phosphate + H(+). Its function is as follows. GTP hydrolase that promotes the GTP-dependent binding of aminoacyl-tRNA to the A-site of ribosomes during protein biosynthesis. The protein is Elongation factor Tu of Legionella pneumophila (strain Lens).